The chain runs to 483 residues: Aspartyl/glutamyl-tRNA(Asn/Gln) amidotransferase subunit B (483 aa).

Belongs to the GatB/GatE family. GatB subfamily. Heterotrimer of A, B and C subunits.

The catalysed reaction is L-glutamyl-tRNA(Gln) + L-glutamine + ATP + H2O = L-glutaminyl-tRNA(Gln) + L-glutamate + ADP + phosphate + H(+). The enzyme catalyses L-aspartyl-tRNA(Asn) + L-glutamine + ATP + H2O = L-asparaginyl-tRNA(Asn) + L-glutamate + ADP + phosphate + 2 H(+). In terms of biological role, allows the formation of correctly charged Asn-tRNA(Asn) or Gln-tRNA(Gln) through the transamidation of misacylated Asp-tRNA(Asn) or Glu-tRNA(Gln) in organisms which lack either or both of asparaginyl-tRNA or glutaminyl-tRNA synthetases. The reaction takes place in the presence of glutamine and ATP through an activated phospho-Asp-tRNA(Asn) or phospho-Glu-tRNA(Gln). The polypeptide is Aspartyl/glutamyl-tRNA(Asn/Gln) amidotransferase subunit B (Herpetosiphon aurantiacus (strain ATCC 23779 / DSM 785 / 114-95)).